Consider the following 233-residue polypeptide: Phosphoribosylformylglycinamidine synthase subunit PurQ (233 aa).

Residues 3-233 (AAILVFPGIN…GLAQHLEKAA (231 aa)) enclose the Glutamine amidotransferase type-1 domain. Catalysis depends on cysteine 87, which acts as the Nucleophile. Active-site residues include histidine 204 and glutamate 206.

In terms of assembly, part of the FGAM synthase complex composed of 1 PurL, 1 PurQ and 2 PurS subunits.

It is found in the cytoplasm. It catalyses the reaction N(2)-formyl-N(1)-(5-phospho-beta-D-ribosyl)glycinamide + L-glutamine + ATP + H2O = 2-formamido-N(1)-(5-O-phospho-beta-D-ribosyl)acetamidine + L-glutamate + ADP + phosphate + H(+). It carries out the reaction L-glutamine + H2O = L-glutamate + NH4(+). The protein operates within purine metabolism; IMP biosynthesis via de novo pathway; 5-amino-1-(5-phospho-D-ribosyl)imidazole from N(2)-formyl-N(1)-(5-phospho-D-ribosyl)glycinamide: step 1/2. Its function is as follows. Part of the phosphoribosylformylglycinamidine synthase complex involved in the purines biosynthetic pathway. Catalyzes the ATP-dependent conversion of formylglycinamide ribonucleotide (FGAR) and glutamine to yield formylglycinamidine ribonucleotide (FGAM) and glutamate. The FGAM synthase complex is composed of three subunits. PurQ produces an ammonia molecule by converting glutamine to glutamate. PurL transfers the ammonia molecule to FGAR to form FGAM in an ATP-dependent manner. PurS interacts with PurQ and PurL and is thought to assist in the transfer of the ammonia molecule from PurQ to PurL. This chain is Phosphoribosylformylglycinamidine synthase subunit PurQ, found in Bradyrhizobium diazoefficiens (strain JCM 10833 / BCRC 13528 / IAM 13628 / NBRC 14792 / USDA 110).